Reading from the N-terminus, the 306-residue chain is Homoserine kinase (306 aa).

Position 88-98 (88-98 (PLARGLGSSAT)) interacts with ATP.

It belongs to the GHMP kinase family. Homoserine kinase subfamily.

Its subcellular location is the cytoplasm. The catalysed reaction is L-homoserine + ATP = O-phospho-L-homoserine + ADP + H(+). It participates in amino-acid biosynthesis; L-threonine biosynthesis; L-threonine from L-aspartate: step 4/5. Its function is as follows. Catalyzes the ATP-dependent phosphorylation of L-homoserine to L-homoserine phosphate. The polypeptide is Homoserine kinase (Synechococcus sp. (strain ATCC 27144 / PCC 6301 / SAUG 1402/1) (Anacystis nidulans)).